Reading from the N-terminus, the 495-residue chain is Phage-like element PBSX protein XkdE (495 aa).

It belongs to the phage portal family. PBSX subfamily.

The polypeptide is Phage-like element PBSX protein XkdE (xkdE) (Bacillus subtilis (strain 168)).